Reading from the N-terminus, the 388-residue chain is Chaperone protein DnaJ (388 aa).

The 66-residue stretch at 5-70 folds into the J domain; it reads DYYEVLGVAR…QKRAAYDRFG (66 aa). Residues 141-219 form a CR-type zinc finger; sequence GKTETIRLPT…CGGAGRVTRE (79 aa). Residues C154, C157, C171, C174, C193, C196, C207, and C210 each coordinate Zn(2+). CXXCXGXG motif repeat units lie at residues 154–161, 171–178, 193–200, and 207–214; these read CEVCAGSG, CPTCGGYG, CPNCHGRG, and CTACGGAG.

The protein belongs to the DnaJ family. As to quaternary structure, homodimer. Zn(2+) is required as a cofactor.

The protein localises to the cytoplasm. Participates actively in the response to hyperosmotic and heat shock by preventing the aggregation of stress-denatured proteins and by disaggregating proteins, also in an autonomous, DnaK-independent fashion. Unfolded proteins bind initially to DnaJ; upon interaction with the DnaJ-bound protein, DnaK hydrolyzes its bound ATP, resulting in the formation of a stable complex. GrpE releases ADP from DnaK; ATP binding to DnaK triggers the release of the substrate protein, thus completing the reaction cycle. Several rounds of ATP-dependent interactions between DnaJ, DnaK and GrpE are required for fully efficient folding. Also involved, together with DnaK and GrpE, in the DNA replication of plasmids through activation of initiation proteins. The chain is Chaperone protein DnaJ from Methylobacterium nodulans (strain LMG 21967 / CNCM I-2342 / ORS 2060).